Here is a 138-residue protein sequence, read N- to C-terminus: Superoxide dismutase [Mn] (138 aa).

Residues S1, H49, D133, and H137 each coordinate Mn(2+).

This sequence belongs to the iron/manganese superoxide dismutase family. Requires Mn(2+) as cofactor.

It carries out the reaction 2 superoxide + 2 H(+) = H2O2 + O2. In terms of biological role, destroys superoxide anion radicals which are normally produced within the cells and which are toxic to biological systems. The polypeptide is Superoxide dismutase [Mn] (sodA) (Mycobacterium marinum).